The sequence spans 411 residues: Adherens junction-associated protein 1 (411 aa).

Residues 1 to 43 (MWIQQLLGLSSMSIRWPGRPLGSHAWILIAMFQLAVDLPACEA) form the signal peptide. Residues 44 to 282 (LGPGPEFWLL…GEASGLAVHQ (239 aa)) are Extracellular-facing. Disordered stretches follow at residues 89–108 (IHGQMQMPRARRAHRPRDQA), 115–197 (AGLA…SNTF), and 239–268 (SLDPRRRIPGGVSTTEPSTSPSNNGEVTQP). The segment covering 115–146 (AGLAKPPAAAKSSPSLASSSSSSSSAVAGGAP) has biased composition (low complexity). Positions 166-178 (SFDSRGSRPTTET) are enriched in polar residues. The span at 247–263 (PGGVSTTEPSTSPSNNG) shows a compositional bias: low complexity. A helical transmembrane segment spans residues 283 to 303 (IITITVSLIMVIAALITTLVL). Residues 303–411 (LKNCCAQSGN…VSEKWFEISC (109 aa)) are targeting signals. Topologically, residues 304–411 (KNCCAQSGNT…VSEKWFEISC (108 aa)) are cytoplasmic. Residues 311–330 (GNTRRNSHQRKTNQQEESCQ) are disordered.

As to quaternary structure, forms a complex with CDH1 and CTNNB1; interacts directly with CTNNB1. Interacts with AP1M2. Interacts with isoform 2 of BSG/CD147. Thr-237 and Ser-239 may be phosphorylated; however as this position is probably extracellular, the in vivo relevance is not proven. Expressed in uterus and pancreas (at protein level).

It is found in the basolateral cell membrane. The protein localises to the apical cell membrane. The protein resides in the cell junction. It localises to the adherens junction. Functionally, plays a role in cell adhesion and cell migration. The chain is Adherens junction-associated protein 1 (AJAP1) from Homo sapiens (Human).